We begin with the raw amino-acid sequence, 399 residues long: Ribonucleoside-diphosphate reductase small chain 1 (399 aa).

A phosphoserine mark is found at serine 15, serine 24, and serine 41. Positions 145, 176, and 179 each coordinate Fe cation. The active site involves tyrosine 183. Fe cation contacts are provided by glutamate 239, glutamate 273, and histidine 276.

It belongs to the ribonucleoside diphosphate reductase small chain family. As to quaternary structure, heterotetramer of two large (R1) and two small (R2) subunits. S.cerevisiae has two different R1 subunits (RNR1 and RNR3) and two different R2 subunits (RNR2 and RNR4). The functional form of the small subunits is a RNR2-RNR4 heterodimer, where RNR2 provides the iron-radical center and RNR4 is required for proper folding of RNR2 and assembly with the large subunits. Under normal growth conditions, the active form of the large subunits is a homodimer of the constitutively expressed RNR1. In damaged cells or cells arrested for DNA synthesis, the reductase consists of multiple species because of the association of the small subunits (RNR2-RNR4) with either the RNR1 homodimer or a heterodimer of RNR1 and the damage-inducible RNR3. Interacts with DIF1. The cofactor is Fe cation.

Its subcellular location is the nucleus. It catalyses the reaction a 2'-deoxyribonucleoside 5'-diphosphate + [thioredoxin]-disulfide + H2O = a ribonucleoside 5'-diphosphate + [thioredoxin]-dithiol. In terms of biological role, provides the precursors necessary for DNA synthesis. Catalyzes the biosynthesis of deoxyribonucleotides from the corresponding ribonucleotides. RNR2 provides the diiron-tyrosyl radical center. In Saccharomyces cerevisiae (strain ATCC 204508 / S288c) (Baker's yeast), this protein is Ribonucleoside-diphosphate reductase small chain 1 (RNR2).